We begin with the raw amino-acid sequence, 638 residues long: Acetolactate synthase 1, chloroplastic (638 aa).

The segment covering 1-19 (MATAAAASTALTGATTAAP) has biased composition (low complexity). A disordered region spans residues 1 to 23 (MATAAAASTALTGATTAAPKARR). Residues 1–39 (MATAAAASTALTGATTAAPKARRRAHLLATRRALAAPIR) constitute a chloroplast transit peptide. E112 lines the thiamine diphosphate pocket. A disulfide bond links C132 and C278. FAD contacts are provided by residues R214, 320 to 341 (HGTV…LGVR), and 363 to 382 (DIDP…ICAD). Residues 455–535 (QHQMWAAQYY…VKVFVLNNQH (81 aa)) form a thiamine pyrophosphate binding region. Residues D506 and N533 each coordinate Mg(2+).

Belongs to the TPP enzyme family. Mg(2+) serves as cofactor. It depends on thiamine diphosphate as a cofactor.

Its subcellular location is the plastid. It localises to the chloroplast. It carries out the reaction 2 pyruvate + H(+) = (2S)-2-acetolactate + CO2. It functions in the pathway amino-acid biosynthesis; L-isoleucine biosynthesis; L-isoleucine from 2-oxobutanoate: step 1/4. The protein operates within amino-acid biosynthesis; L-valine biosynthesis; L-valine from pyruvate: step 1/4. The sequence is that of Acetolactate synthase 1, chloroplastic (ALS1) from Zea mays (Maize).